A 206-amino-acid chain; its full sequence is Dephospho-CoA kinase (206 aa).

In terms of domain architecture, DPCK spans 6 to 206; sequence IIGLTGGIAS…KWKWKDWSKK (201 aa). Position 14–19 (14–19) interacts with ATP; that stretch reads ASGKST.

This sequence belongs to the CoaE family.

Its subcellular location is the cytoplasm. The enzyme catalyses 3'-dephospho-CoA + ATP = ADP + CoA + H(+). It functions in the pathway cofactor biosynthesis; coenzyme A biosynthesis; CoA from (R)-pantothenate: step 5/5. Functionally, catalyzes the phosphorylation of the 3'-hydroxyl group of dephosphocoenzyme A to form coenzyme A. The sequence is that of Dephospho-CoA kinase from Carboxydothermus hydrogenoformans (strain ATCC BAA-161 / DSM 6008 / Z-2901).